A 30-amino-acid chain; its full sequence is Bacteriocin SRCAM 37 (30 aa).

The protein belongs to the bacteriocin class IIA/YGNGV family.

The protein localises to the secreted. Its function is as follows. Bacteriocin with antibacterial activity against C.jejuni. This Paenibacillus polymyxa (Bacillus polymyxa) protein is Bacteriocin SRCAM 37.